A 1313-amino-acid polypeptide reads, in one-letter code: Angiotensin-converting enzyme (1313 aa).

A signal peptide spans 1 to 35; that stretch reads MGAASGQRGRWPLSPPLLMLSLLLLLLLPPSPAPA. Topologically, residues 36-1265 are extracellular; the sequence is LDPGLQPGNF…LEPQQARVGQ (1230 aa). N-linked (GlcNAc...) asparagine glycans are attached at residues Asn-44, Asn-60, Asn-80, Asn-117, Asn-152, and Asn-166. Peptidase M2 domains lie at 46-630 and 649-1228; these read SADE…LGWP and ETDE…LGWP. Residues Cys-163 and Cys-171 are joined by a disulfide bond. Tyr-237 provides a ligand contact to chloride. N-linked (GlcNAc...) asparagine glycosylation is present at Asn-324. Cys-365 and Cys-383 are disulfide-bonded. His-396 contacts Zn(2+). The active-site Proton acceptor 1 is the Glu-397. Zn(2+)-binding residues include His-400 and Glu-424. Asn-515 carries N-linked (GlcNAc...) asparagine glycosylation. The active-site Proton donor 1 is the His-526. Arg-535 is a chloride binding site. A disulfide bond links Cys-551 and Cys-563. Residues Asn-683, Asn-701, Asn-720, and Asn-766 are each glycosylated (N-linked (GlcNAc...) asparagine). A disulfide bond links Cys-763 and Cys-769. Chloride contacts are provided by Arg-797 and Tyr-835. Residue Asn-948 is glycosylated (N-linked (GlcNAc...) asparagine). Cysteines 963 and 981 form a disulfide. His-994 contacts Zn(2+). Glu-995 acts as the Proton acceptor 2 in catalysis. Residues His-998 and Glu-1022 each contribute to the Zn(2+) site. Residues Trp-1096 and Arg-1100 each coordinate chloride. His-1124 (proton donor 2) is an active-site residue. A chloride-binding site is contributed by Arg-1133. Cys-1149 and Cys-1161 are disulfide-bonded. Asn-1197 carries an N-linked (GlcNAc...) asparagine glycan. A juxtamembrane stalk region spans residues 1221-1262; sequence HGETLGWPEYTWTPNTARAEGSLPESSRVNFLGMYLEPQQAR. Residues 1266 to 1282 form a helical membrane-spanning segment; it reads WVLLFLGVALLVATVGL. Topologically, residues 1283–1313 are cytoplasmic; it reads AHRLYNIHNHHSLRRPHRGPQFGSEVELRHS. Phosphoserine is present on Ser-1306.

This sequence belongs to the peptidase M2 family. In terms of assembly, monomer and homodimer; homodimerizes following binding to an inhibitor. Interacts with calmodulin (CALM1, CALM2 or CALM3); interaction takes place in the cytoplasmic region and regulates phosphorylation and proteolytic cleavage. The cofactor is Zn(2+). Requires chloride as cofactor. In terms of processing, produced following proteolytic cleavage by secretase enzymes that cleave the transmembrane form in the juxtamembrane stalk region upstream of the transmembrane region. Cleavage can take place at different sites of the juxtamembrane stalk region. Post-translationally, phosphorylated by CK2 on Ser-1306; which allows membrane retention. Phosphorylated on tyrosine residues on its extracellular part, promoting cleavage by secretase enzymes and formation of the soluble form (Angiotensin-converting enzyme, soluble form). In terms of tissue distribution, expressed in brain, kidney, lung, skeletal muscle and heart. Testis-specific isoform is expressed in spermatocytes, adult testis.

Its subcellular location is the cell membrane. It localises to the cytoplasm. The protein resides in the secreted. It carries out the reaction Release of a C-terminal dipeptide, oligopeptide-|-Xaa-Yaa, when Xaa is not Pro, and Yaa is neither Asp nor Glu. Thus, conversion of angiotensin I to angiotensin II, with increase in vasoconstrictor activity, but no action on angiotensin II.. It catalyses the reaction angiotensin I + H2O = L-histidyl-L-leucine + angiotensin II. The catalysed reaction is bradykinin + H2O = L-Phe-L-Arg + bradykinin(1-7). The enzyme catalyses substance P + H2O = substance P(1-9) + L-Leu-L-Met-NH2. It carries out the reaction substance P + H2O = substance P(1-8) + Gly-L-Leu-L-Met-NH2. It catalyses the reaction substance P + H2O = L-Phe-L-Phe-Gly-L-Leu-L-Met-NH2 + substance P(1-6). The catalysed reaction is neurotensin + H2O = neurotensin(1-11) + L-isoleucyl-L-leucine. The enzyme catalyses goralatide + H2O = N-acetyl-L-seryl-L-aspartate + L-lysyl-L-proline. It carries out the reaction Met-enkephalin + H2O = L-phenylalanyl-L-methionine + L-tyrosylglycylglycine. It catalyses the reaction Leu-enkephalin + H2O = L-tyrosylglycylglycine + L-phenylalanyl-L-leucine. The catalysed reaction is Met-enkephalin-Arg-Phe + H2O = L-arginyl-L-phenylalanine + Met-enkephalin. Its activity is regulated as follows. The dipeptidyl carboxypeptidase activity is strongly activated by chloride. The dipeptidyl carboxypeptidase activity is specifically inhibited by lisinopril, captopril and enalaprilat. With respect to regulation, strongly inhibited by lisinopril and captopril. In terms of biological role, dipeptidyl carboxypeptidase that removes dipeptides from the C-terminus of a variety of circulating hormones, such as angiotensin I, bradykinin or enkephalins, thereby playing a key role in the regulation of blood pressure, electrolyte homeostasis or synaptic plasticity. Composed of two similar catalytic domains, each possessing a functional active site, with different selectivity for substrates. Plays a major role in the angiotensin-renin system that regulates blood pressure and sodium retention by the kidney by converting angiotensin I to angiotensin II, resulting in an increase of the vasoconstrictor activity of angiotensin. Also able to inactivate bradykinin, a potent vasodilator, and therefore enhance the blood pressure response. Acts as a regulator of synaptic transmission by mediating cleavage of neuropeptide hormones, such as substance P, neurotensin or enkephalins. Catalyzes degradation of different enkephalin neuropeptides (Met-enkephalin, Leu-enkephalin, Met-enkephalin-Arg-Phe and possibly Met-enkephalin-Arg-Gly-Leu). Acts as a regulator of synaptic plasticity in the nucleus accumbens of the brain by mediating cleavage of Met-enkephalin-Arg-Phe, a strong ligand of Mu-type opioid receptor OPRM1, into Met-enkephalin. Met-enkephalin-Arg-Phe cleavage by ACE decreases activation of OPRM1, leading to long-term synaptic potentiation of glutamate release. Also acts as a regulator of hematopoietic stem cell differentiation by mediating degradation of hemoregulatory peptide N-acetyl-SDKP (AcSDKP). Acts as a regulator of cannabinoid signaling pathway by mediating degradation of hemopressin, an antagonist peptide of the cannabinoid receptor CNR1. Involved in amyloid-beta metabolism by catalyzing degradation of Amyloid-beta protein 40 and Amyloid-beta protein 42 peptides, thereby preventing plaque formation. Catalyzes cleavage of cholecystokinin (maturation of Cholecystokinin-8 and Cholecystokinin-5) and Gonadoliberin-1 (both maturation and degradation) hormones. Degradation of hemoregulatory peptide N-acetyl-SDKP (AcSDKP) and amyloid-beta proteins is mediated by the N-terminal catalytic domain, while angiotensin I and cholecystokinin cleavage is mediated by the C-terminal catalytic region. Soluble form that is released in blood plasma and other body fluids following proteolytic cleavage in the juxtamembrane stalk region. Functionally, isoform produced by alternative promoter usage that is specifically expressed in spermatocytes and adult testis, and which is required for male fertility. In contrast to somatic isoforms, only contains one catalytic domain. Acts as a dipeptidyl carboxypeptidase that removes dipeptides from the C-terminus of substrates. The identity of substrates that are needed for male fertility is unknown. May also have a glycosidase activity which releases GPI-anchored proteins from the membrane by cleaving the mannose linkage in the GPI moiety. The GPIase activity was reported to be essential for the egg-binding ability of the sperm. This activity is however unclear and has been challenged by other groups, suggesting that it may be indirect. This chain is Angiotensin-converting enzyme, found in Rattus norvegicus (Rat).